Consider the following 513-residue polypeptide: Cytochrome P450 4p1 (513 aa).

Heme-binding residues include E320 and C459.

Belongs to the cytochrome P450 family. Heme is required as a cofactor.

It is found in the endoplasmic reticulum membrane. It localises to the microsome membrane. Its function is as follows. May be involved in the metabolism of insect hormones and in the breakdown of synthetic insecticides. This chain is Cytochrome P450 4p1 (Cyp4p1), found in Drosophila melanogaster (Fruit fly).